Reading from the N-terminus, the 519-residue chain is 2-isopropylmalate synthase (519 aa).

In terms of domain architecture, Pyruvate carboxyltransferase spans 12 to 274; sequence IRIFDTTLRD…DTSIHTSRIV (263 aa). Mn(2+)-binding residues include Asp21, His209, His211, and Asn245. The regulatory domain stretch occupies residues 396–519; the sequence is RLASMTISDV…MQNKQNTALA (124 aa).

It belongs to the alpha-IPM synthase/homocitrate synthase family. LeuA type 1 subfamily. Homodimer. Requires Mn(2+) as cofactor.

Its subcellular location is the cytoplasm. The enzyme catalyses 3-methyl-2-oxobutanoate + acetyl-CoA + H2O = (2S)-2-isopropylmalate + CoA + H(+). Its pathway is amino-acid biosynthesis; L-leucine biosynthesis; L-leucine from 3-methyl-2-oxobutanoate: step 1/4. In terms of biological role, catalyzes the condensation of the acetyl group of acetyl-CoA with 3-methyl-2-oxobutanoate (2-ketoisovalerate) to form 3-carboxy-3-hydroxy-4-methylpentanoate (2-isopropylmalate). This Xylella fastidiosa (strain M23) protein is 2-isopropylmalate synthase.